The following is a 161-amino-acid chain: General odorant-binding protein 2 (161 aa).

The N-terminal stretch at 1–20 (MVNRLILMVVVVFITDSVMG) is a signal peptide. Cystine bridges form between C39-C74, C70-C128, and C117-C137.

Belongs to the PBP/GOBP family. In terms of assembly, homodimer. In terms of tissue distribution, olfactory tissue; expressed by the glia-like support cells that ensheathe the sensory neurons and line the base of the sensillum lumen.

In terms of biological role, present in the aqueous fluid surrounding olfactory sensory dendrites and are thought to aid in the capture and transport of hydrophobic odorants into and through this fluid. The polypeptide is General odorant-binding protein 2 (GOBP2) (Manduca sexta (Tobacco hawkmoth)).